The sequence spans 1199 residues: Chromatin structure-remodeling complex subunit snf21 (1199 aa).

Positions 256 to 328 (QRSDRERRLK…AKQRLQALKE (73 aa)) constitute an HSA domain. The Helicase ATP-binding domain occupies 429-594 (ISLYNNHLNG…WALLNFVLPR (166 aa)). An ATP-binding site is contributed by 442–449 (DEMGLGKT). Residues 544-547 (DEGH) carry the DEGH box motif. The 164-residue stretch at 740–903 (LLDRILPKLF…STPEEREAFL (164 aa)) folds into the Helicase C-terminal domain. A disordered region spans residues 1017-1059 (MESEARPTRGRPKRNIASVDETPALTLNGKPKKKRGPAPDTLT). Residues 1061–1171 (EHRSLLRRVC…TAMETKIEEL (111 aa)) form the Bromo domain.

This sequence belongs to the SNF2/RAD54 helicase family. Component of the RSC complex composed of at least arp9, arp42, rsc1, rsc4, rsc7, rsc9, rsc58, sfh1, snf21, ssr1, ssr2, ssr3 and ssr4. The complex interacts with histone and histone variant components of centromeric chromatin.

The protein localises to the nucleus. Helicase. Component of the chromatin structure remodeling complex (RSC), which is involved in transcription regulation and nucleosome positioning. Controls particularly membrane and organelle development genes. The protein is Chromatin structure-remodeling complex subunit snf21 (snf21) of Schizosaccharomyces pombe (strain 972 / ATCC 24843) (Fission yeast).